The chain runs to 448 residues: Enolase (448 aa).

Gln164 provides a ligand contact to (2R)-2-phosphoglycerate. Glu206 acts as the Proton donor in catalysis. Residues Asp243, Glu289, and Asp316 each contribute to the Mg(2+) site. Lys341, Arg370, Ser371, and Lys392 together coordinate (2R)-2-phosphoglycerate. Lys341 functions as the Proton acceptor in the catalytic mechanism.

This sequence belongs to the enolase family. The cofactor is Mg(2+).

The protein localises to the cytoplasm. It is found in the secreted. The protein resides in the cell surface. The catalysed reaction is (2R)-2-phosphoglycerate = phosphoenolpyruvate + H2O. Its pathway is carbohydrate degradation; glycolysis; pyruvate from D-glyceraldehyde 3-phosphate: step 4/5. Catalyzes the reversible conversion of 2-phosphoglycerate (2-PG) into phosphoenolpyruvate (PEP). It is essential for the degradation of carbohydrates via glycolysis. This chain is Enolase, found in Oenococcus oeni (strain ATCC BAA-331 / PSU-1).